The sequence spans 299 residues: ATP phosphoribosyltransferase (299 aa).

It belongs to the ATP phosphoribosyltransferase family. Long subfamily. Equilibrium between an active dimeric form, an inactive hexameric form and higher aggregates. Interconversion between the various forms is largely reversible and is influenced by the natural substrates and inhibitors of the enzyme. Requires Mg(2+) as cofactor.

It localises to the cytoplasm. The enzyme catalyses 1-(5-phospho-beta-D-ribosyl)-ATP + diphosphate = 5-phospho-alpha-D-ribose 1-diphosphate + ATP. The protein operates within amino-acid biosynthesis; L-histidine biosynthesis; L-histidine from 5-phospho-alpha-D-ribose 1-diphosphate: step 1/9. With respect to regulation, feedback inhibited by histidine. Functionally, catalyzes the condensation of ATP and 5-phosphoribose 1-diphosphate to form N'-(5'-phosphoribosyl)-ATP (PR-ATP). Has a crucial role in the pathway because the rate of histidine biosynthesis seems to be controlled primarily by regulation of HisG enzymatic activity. This is ATP phosphoribosyltransferase (hisG) from Buchnera aphidicola subsp. Schizaphis graminum (strain Sg).